The primary structure comprises 153 residues: 3-hydroxyacyl-[acyl-carrier-protein] dehydratase FabZ (153 aa).

His54 is an active-site residue.

Belongs to the thioester dehydratase family. FabZ subfamily.

It localises to the cytoplasm. It carries out the reaction a (3R)-hydroxyacyl-[ACP] = a (2E)-enoyl-[ACP] + H2O. Its function is as follows. Involved in unsaturated fatty acids biosynthesis. Catalyzes the dehydration of short chain beta-hydroxyacyl-ACPs and long chain saturated and unsaturated beta-hydroxyacyl-ACPs. In Shewanella amazonensis (strain ATCC BAA-1098 / SB2B), this protein is 3-hydroxyacyl-[acyl-carrier-protein] dehydratase FabZ.